Here is a 248-residue protein sequence, read N- to C-terminus: Triosephosphate isomerase (248 aa).

9–11 provides a ligand contact to substrate; the sequence is NWK. His-94 (electrophile) is an active-site residue. Residue Glu-166 is the Proton acceptor of the active site. Substrate contacts are provided by residues Gly-172, Ser-212, and 233 to 234; that span reads GG.

It belongs to the triosephosphate isomerase family. As to quaternary structure, homodimer.

It is found in the cytoplasm. It carries out the reaction D-glyceraldehyde 3-phosphate = dihydroxyacetone phosphate. It participates in carbohydrate biosynthesis; gluconeogenesis. The protein operates within carbohydrate degradation; glycolysis; D-glyceraldehyde 3-phosphate from glycerone phosphate: step 1/1. In terms of biological role, involved in the gluconeogenesis. Catalyzes stereospecifically the conversion of dihydroxyacetone phosphate (DHAP) to D-glyceraldehyde-3-phosphate (G3P). In Clostridium perfringens (strain ATCC 13124 / DSM 756 / JCM 1290 / NCIMB 6125 / NCTC 8237 / Type A), this protein is Triosephosphate isomerase.